The following is a 39-amino-acid chain: MDRNSNPNRQPVELNRTSLYLGLLLVAVLGILFSSYFFN.

The helical transmembrane segment at 16–37 (RTSLYLGLLLVAVLGILFSSYF) threads the bilayer.

It belongs to the PsbL family. As to quaternary structure, PSII is composed of 1 copy each of membrane proteins PsbA, PsbB, PsbC, PsbD, PsbE, PsbF, PsbH, PsbI, PsbJ, PsbK, PsbL, PsbM, PsbT, PsbX, PsbY, PsbZ, Psb30/Ycf12, peripheral proteins PsbO, CyanoQ (PsbQ), PsbU, PsbV and a large number of cofactors. It forms dimeric complexes.

The protein localises to the cellular thylakoid membrane. One of the components of the core complex of photosystem II (PSII). PSII is a light-driven water:plastoquinone oxidoreductase that uses light energy to abstract electrons from H(2)O, generating O(2) and a proton gradient subsequently used for ATP formation. It consists of a core antenna complex that captures photons, and an electron transfer chain that converts photonic excitation into a charge separation. This subunit is found at the monomer-monomer interface and is required for correct PSII assembly and/or dimerization. Required for PSII activity, at least in part due to its effects on PSII assembly. May make specific contact(s) with lipids. This chain is Photosystem II reaction center protein L, found in Synechocystis sp. (strain ATCC 27184 / PCC 6803 / Kazusa).